The primary structure comprises 123 residues: Small ribosomal subunit protein uS12c (123 aa).

Positions 1–20 are enriched in polar residues; it reads MPTIQQLIRNTRQPTQNRTK. The tract at residues 1–27 is disordered; it reads MPTIQQLIRNTRQPTQNRTKSPALKAC.

Belongs to the universal ribosomal protein uS12 family. As to quaternary structure, part of the 30S ribosomal subunit.

The protein localises to the plastid. It localises to the chloroplast. Functionally, with S4 and S5 plays an important role in translational accuracy. Located at the interface of the 30S and 50S subunits. This is Small ribosomal subunit protein uS12c (rps12) from Zygnema circumcarinatum (Green alga).